A 164-amino-acid polypeptide reads, in one-letter code: Thiol peroxidase (164 aa).

The region spanning 16–162 (LQVGDIAKDF…YEAAINAAKI (147 aa)) is the Thioredoxin domain. The Cysteine sulfenic acid (-SOH) intermediate role is filled by C58. The cysteines at positions 58 and 92 are disulfide-linked.

It belongs to the peroxiredoxin family. Tpx subfamily. In terms of assembly, homodimer.

It catalyses the reaction a hydroperoxide + [thioredoxin]-dithiol = an alcohol + [thioredoxin]-disulfide + H2O. In terms of biological role, thiol-specific peroxidase that catalyzes the reduction of hydrogen peroxide and organic hydroperoxides to water and alcohols, respectively. Plays a role in cell protection against oxidative stress by detoxifying peroxides. This Streptococcus agalactiae serotype III (strain NEM316) protein is Thiol peroxidase.